Consider the following 317-residue polypeptide: Transaldolase (317 aa).

The active-site Schiff-base intermediate with substrate is Lys132.

This sequence belongs to the transaldolase family. Type 1 subfamily.

It is found in the cytoplasm. The catalysed reaction is D-sedoheptulose 7-phosphate + D-glyceraldehyde 3-phosphate = D-erythrose 4-phosphate + beta-D-fructose 6-phosphate. It participates in carbohydrate degradation; pentose phosphate pathway; D-glyceraldehyde 3-phosphate and beta-D-fructose 6-phosphate from D-ribose 5-phosphate and D-xylulose 5-phosphate (non-oxidative stage): step 2/3. Functionally, transaldolase is important for the balance of metabolites in the pentose-phosphate pathway. The protein is Transaldolase of Haemophilus influenzae (strain ATCC 51907 / DSM 11121 / KW20 / Rd).